The sequence spans 711 residues: Polyribonucleotide nucleotidyltransferase (711 aa).

2 residues coordinate Mg(2+): D486 and D492. Residues 553–612 enclose the KH domain; that stretch reads PRIHTIKISTDKIKDVIGKGGSVIRALTEETGTTIEIEDDGTVKIAATDGEKAKYAIRRI. Residues 622-690 form the S1 motif domain; that stretch reads GRIYNGKVTR…RQGRVRLSIK (69 aa). The disordered stretch occupies residues 690-711; sequence KEATEQSQPAAAPEAPASEQAE. The segment covering 694–711 has biased composition (low complexity); the sequence is EQSQPAAAPEAPASEQAE.

This sequence belongs to the polyribonucleotide nucleotidyltransferase family. Component of the RNA degradosome, which is a multiprotein complex involved in RNA processing and mRNA degradation. The cofactor is Mg(2+).

The protein resides in the cytoplasm. It catalyses the reaction RNA(n+1) + phosphate = RNA(n) + a ribonucleoside 5'-diphosphate. Its function is as follows. Involved in mRNA degradation. Catalyzes the phosphorolysis of single-stranded polyribonucleotides processively in the 3'- to 5'-direction. This chain is Polyribonucleotide nucleotidyltransferase, found in Salmonella choleraesuis (strain SC-B67).